Reading from the N-terminus, the 434-residue chain is MKTLRLNFRSAILKALGALLLLQGCLAHAQVQELDRVVAVVNDDIVLYSELQDRASRIKDKLRQQKTPLPPEAVLHEKVLDQLVLESIQMQMADRGGIRVSDSQLNQTMQNIAKQNGMTLDQFQQALSEEGVTYQSAREQIRREMIISRVQQRSVDSRVRVTEKEVNDFLKSASAKEQRAEEYHLAHILIALPENPSDAQRKEAESKVEKIRSQLDQGVDFKQLAITYSDASTATQGGDLGWRKPDQVPSLFADVAPKLAPGQTSEPIRNSSGVHFVAMLEKRGGVSKVVEQSKVRHILVQQNELRDEIAAKKLIEEIYGKVQAGEDFAELAKAYSDDAVSAAAGGSLDWVNPGDMVPEFDQMMRETPVGAVSKPFQSTFGWHILQVQDRREADIGDRLMASQARQVLHRRKYEEELQNWLSEIRDEAFVQLKL.

An N-terminal signal peptide occupies residues 1–29 (MKTLRLNFRSAILKALGALLLLQGCLAHA). 2 consecutive PpiC domains span residues 180–281 (AEEY…AMLE) and 290–389 (VEQS…QVQD).

It is found in the periplasm. The enzyme catalyses [protein]-peptidylproline (omega=180) = [protein]-peptidylproline (omega=0). Chaperone involved in the correct folding and assembly of outer membrane proteins. Recognizes specific patterns of aromatic residues and the orientation of their side chains, which are found more frequently in integral outer membrane proteins. May act in both early periplasmic and late outer membrane-associated steps of protein maturation. This chain is Chaperone SurA, found in Hahella chejuensis (strain KCTC 2396).